Consider the following 722-residue polypeptide: D-galactosyl-beta-1-&gt;4-L-rhamnose phosphorylase (722 aa).

Aspartate 319 serves as the catalytic Proton donor.

This sequence belongs to the glycoside hydrolase 112 family.

The enzyme catalyses beta-D-galactosyl-(1-&gt;4)-L-rhamnose + phosphate = alpha-D-galactose 1-phosphate + L-rhamnopyranose. In terms of biological role, reversibly phosphorolyzes beta-D-galactosyl-(1-&gt;4)-L-rhamnose to form alpha-D-galactose 1-phosphate and L-rhamnose. Does not phosphorolyze galacto-N-biose or lacto-N-biose. In the reverse reaction, has the highest activity toward L-rhamnose, also has activity toward L-mannose, and low activity toward L-lyxose, D-glucose, 2-deoxy-D-glucose and D-galactose. This Lachnoclostridium phytofermentans (strain ATCC 700394 / DSM 18823 / ISDg) (Clostridium phytofermentans) protein is D-galactosyl-beta-1-&gt;4-L-rhamnose phosphorylase.